A 574-amino-acid chain; its full sequence is ATP-dependent RNA helicase RhlB (574 aa).

The Q motif signature appears at 9-37 (VTFSSFDLHPALVAGLESAGFTRCTPIQA). The Helicase ATP-binding domain occupies 40–220 (LPVALPGGDV…YEHMNEPEKL (181 aa)). Residue 53–60 (AQTGTGKT) coordinates ATP. Positions 166 to 169 (DEAD) match the DEAD box motif. The Helicase C-terminal domain maps to 231 to 393 (RVRQRIYFPS…PVTSELLTPL (163 aa)). Residues 423–432 (EQRAAEEQRR) are compositionally biased toward basic and acidic residues. The disordered stretch occupies residues 423–574 (EQRAAEEQRR…RRLRSLVSGN (152 aa)). Gly residues predominate over residues 435–449 (GRSGPGGGSRSGSGG). Residues 477–495 (AAAAQTEKPVVAAAAAQAP) are compositionally biased toward low complexity. Residues 506-515 (PRKRRRRRNG) are compositionally biased toward basic residues. 2 stretches are compositionally biased toward low complexity: residues 523–535 (PAVA…APAA) and 553–562 (SSGSPSLLGR).

Belongs to the DEAD box helicase family. RhlB subfamily. In terms of assembly, component of the RNA degradosome, which is a multiprotein complex involved in RNA processing and mRNA degradation.

The protein resides in the cytoplasm. It carries out the reaction ATP + H2O = ADP + phosphate + H(+). In terms of biological role, DEAD-box RNA helicase involved in RNA degradation. Has RNA-dependent ATPase activity and unwinds double-stranded RNA. This is ATP-dependent RNA helicase RhlB from Xanthomonas oryzae pv. oryzae (strain KACC10331 / KXO85).